A 296-amino-acid polypeptide reads, in one-letter code: Ribosomal RNA small subunit methyltransferase A (296 aa).

Residues Asn-32, Leu-34, Gly-59, Glu-80, Asp-105, and Asn-130 each coordinate S-adenosyl-L-methionine.

Belongs to the class I-like SAM-binding methyltransferase superfamily. rRNA adenine N(6)-methyltransferase family. RsmA subfamily.

Its subcellular location is the cytoplasm. The enzyme catalyses adenosine(1518)/adenosine(1519) in 16S rRNA + 4 S-adenosyl-L-methionine = N(6)-dimethyladenosine(1518)/N(6)-dimethyladenosine(1519) in 16S rRNA + 4 S-adenosyl-L-homocysteine + 4 H(+). In terms of biological role, specifically dimethylates two adjacent adenosines (A1518 and A1519) in the loop of a conserved hairpin near the 3'-end of 16S rRNA in the 30S particle. May play a critical role in biogenesis of 30S subunits. This chain is Ribosomal RNA small subunit methyltransferase A, found in Ligilactobacillus salivarius (strain UCC118) (Lactobacillus salivarius).